Here is a 227-residue protein sequence, read N- to C-terminus: Ashwin (227 aa).

Residues 71-84 (LPRSRWGKRMEKSR) are compositionally biased toward basic and acidic residues. Positions 71-227 (LPRSRWGKRM…KKKIQHITWP (157 aa)) are disordered. Over residues 88–98 (SSSSTHSSSTD) the composition is skewed to low complexity. Positions 153 to 173 (GASTNCSSSNFSNRTPVSSSG) are enriched in polar residues. Low complexity predominate over residues 178–191 (SPSNHSNSSVHSNN). The span at 204–219 (GEPDTAKDIKSPETKK) shows a compositional bias: basic and acidic residues.

It belongs to the ashwin family.

The protein resides in the nucleus. This is Ashwin from Danio rerio (Zebrafish).